A 1063-amino-acid chain; its full sequence is ATP-dependent helicase hrq1 (1063 aa).

The disordered stretch occupies residues 224–243; that stretch reads TQSRKNQPVPPDSPSIPNDS. Positions 320–503 constitute a Helicase ATP-binding domain; that stretch reads INHLWNGFHV…KIFGVDNIKL (184 aa). 333 to 340 contributes to the ATP binding site; sequence TSTSSGKS. The DEAH box signature appears at 444 to 447; the sequence is DEAH. Residues 539–717 enclose the Helicase C-terminal domain; that stretch reads EASKLLIKFA…ELPINIRSDE (179 aa).

Belongs to the helicase family. HRQ1 subfamily. As to quaternary structure, forms heptamer rings. Interacts with rhp14. Mg(2+) is required as a cofactor.

Its subcellular location is the nucleus. It carries out the reaction Couples ATP hydrolysis with the unwinding of duplex DNA by translocating in the 3'-5' direction.. It catalyses the reaction ATP + H2O = ADP + phosphate + H(+). Helicase with 3'-5' helicase activity involved in genome stability. Functions in the nucleotide excision repair (NER) pathway and plays a critical role in DNA interstrand cross-link repair. Unwinds relatively long duplex DNA up to 120-bp and requires a long 3'-tail of at least 70 nucleotides for efficient unwinding of duplex DNA. Shows both processive helicase and DNA strand annealing activities. Affects telomere length by a non-catalytic mechanism, probably through inhibiting telomerase by competing with it for ssDNA binding. This chain is ATP-dependent helicase hrq1, found in Schizosaccharomyces pombe (strain 972 / ATCC 24843) (Fission yeast).